Here is a 343-residue protein sequence, read N- to C-terminus: L-threonine 3-dehydrogenase (343 aa).

A Zn(2+)-binding site is contributed by cysteine 40. Residues threonine 42 and histidine 45 each act as charge relay system in the active site. Zn(2+)-binding residues include histidine 65, glutamate 66, cysteine 95, cysteine 98, cysteine 101, and cysteine 109. Residues isoleucine 177, aspartate 197, arginine 202, 264-266, and 288-289 contribute to the NAD(+) site; these read LGI and IY.

The protein belongs to the zinc-containing alcohol dehydrogenase family. Homotetramer. Zn(2+) serves as cofactor.

The protein localises to the cytoplasm. It carries out the reaction L-threonine + NAD(+) = (2S)-2-amino-3-oxobutanoate + NADH + H(+). It functions in the pathway amino-acid degradation; L-threonine degradation via oxydo-reductase pathway; glycine from L-threonine: step 1/2. Catalyzes the NAD(+)-dependent oxidation of L-threonine to 2-amino-3-ketobutyrate. The sequence is that of L-threonine 3-dehydrogenase from Photobacterium profundum (strain SS9).